The following is a 397-amino-acid chain: GTPase Obg (397 aa).

The 159-residue stretch at 1–159 (MKFVDEAEIR…RMLKLELMLL (159 aa)) folds into the Obg domain. The segment at 22–44 (SFRREKYVPDGGPDGGDGGDGGS) is disordered. The segment covering 33 to 43 (GPDGGDGGDGG) has biased composition (gly residues). Positions 160 to 333 (ADVGLLGMPN…LCIKVMDFIE (174 aa)) constitute an OBG-type G domain. Residues 166-173 (GMPNAGKS), 191-195 (FTTLV), 213-216 (DIPG), 283-286 (NKVD), and 314-316 (SAV) each bind GTP. Mg(2+) contacts are provided by serine 173 and threonine 193. A disordered region spans residues 359–389 (TVENYEDDDDFDDDDDDDFDGDDDDDFDGDD). Acidic residues predominate over residues 361–389 (ENYEDDDDFDDDDDDDFDGDDDDDFDGDD).

The protein belongs to the TRAFAC class OBG-HflX-like GTPase superfamily. OBG GTPase family. Monomer. The cofactor is Mg(2+).

It localises to the cytoplasm. Functionally, an essential GTPase which binds GTP, GDP and possibly (p)ppGpp with moderate affinity, with high nucleotide exchange rates and a fairly low GTP hydrolysis rate. Plays a role in control of the cell cycle, stress response, ribosome biogenesis and in those bacteria that undergo differentiation, in morphogenesis control. The protein is GTPase Obg of Pseudoalteromonas atlantica (strain T6c / ATCC BAA-1087).